Here is a 172-residue protein sequence, read N- to C-terminus: 3-hydroxydecanoyl-[acyl-carrier-protein] dehydratase (172 aa).

His-71 is an active-site residue.

Belongs to the thioester dehydratase family. FabA subfamily. In terms of assembly, homodimer.

It localises to the cytoplasm. The catalysed reaction is a (3R)-hydroxyacyl-[ACP] = a (2E)-enoyl-[ACP] + H2O. The enzyme catalyses (3R)-hydroxydecanoyl-[ACP] = (2E)-decenoyl-[ACP] + H2O. It carries out the reaction (2E)-decenoyl-[ACP] = (3Z)-decenoyl-[ACP]. It functions in the pathway lipid metabolism; fatty acid biosynthesis. Its function is as follows. Necessary for the introduction of cis unsaturation into fatty acids. Catalyzes the dehydration of (3R)-3-hydroxydecanoyl-ACP to E-(2)-decenoyl-ACP and then its isomerization to Z-(3)-decenoyl-ACP. Can catalyze the dehydratase reaction for beta-hydroxyacyl-ACPs with saturated chain lengths up to 16:0, being most active on intermediate chain length. This is 3-hydroxydecanoyl-[acyl-carrier-protein] dehydratase from Escherichia coli O6:K15:H31 (strain 536 / UPEC).